The following is a 302-amino-acid chain: Aurora/IPL1-related protein kinase 2 (302 aa).

Positions 1 to 17 (MENKPQILQTKSKNTPN) are enriched in polar residues. Residues 1-23 (MENKPQILQTKSKNTPNKGGKLS) form a disordered region. In terms of domain architecture, Protein kinase spans 27–277 (FEIGRPLGKG…LQEVKDHYWV (251 aa)). Residues 33–41 (LGKGKFGSV) and Lys-56 contribute to the ATP site. Asp-150 serves as the catalytic Proton acceptor.

Belongs to the protein kinase superfamily. Ser/Thr protein kinase family. In terms of assembly, interacts with zen-4 and icp-1. Part of a complex containing at least air-2; icp-1; csc-1 and bir-1. Interacts with tlk-1 and bmk-1.

The protein localises to the cytoplasm. The protein resides in the cytoskeleton. It is found in the chromosome. It localises to the midbody. The catalysed reaction is L-seryl-[protein] + ATP = O-phospho-L-seryl-[protein] + ADP + H(+). It carries out the reaction L-threonyl-[protein] + ATP = O-phospho-L-threonyl-[protein] + ADP + H(+). Functionally, serine/threonine-protein kinase which mediates both meiotic and mitotic chromosome segregation. Required for histone H3 'Ser-10' phosphorylation. Phosphorylates tlk-1 and zen-4. The protein is Aurora/IPL1-related protein kinase 2 (air-2) of Caenorhabditis briggsae.